The chain runs to 510 residues: Ribonuclease Y (510 aa).

The helical transmembrane segment at leucine 4–tyrosine 24 threads the bilayer. In terms of domain architecture, KH spans threonine 200–leucine 260. The 94-residue stretch at valine 326 to alanine 419 folds into the HD domain.

This sequence belongs to the RNase Y family.

The protein localises to the cell membrane. Functionally, endoribonuclease that initiates mRNA decay. This is Ribonuclease Y from Chloroflexus aurantiacus (strain ATCC 29366 / DSM 635 / J-10-fl).